We begin with the raw amino-acid sequence, 264 residues long: L-aspartate dehydrogenase (264 aa).

2 residues coordinate NAD(+): alanine 120 and asparagine 186. Histidine 216 is an active-site residue.

Belongs to the L-aspartate dehydrogenase family.

The catalysed reaction is L-aspartate + NADP(+) + H2O = oxaloacetate + NH4(+) + NADPH + H(+). It catalyses the reaction L-aspartate + NAD(+) + H2O = oxaloacetate + NH4(+) + NADH + H(+). Its pathway is cofactor biosynthesis; NAD(+) biosynthesis; iminoaspartate from L-aspartate (dehydrogenase route): step 1/1. Specifically catalyzes the NAD or NADP-dependent dehydrogenation of L-aspartate to iminoaspartate. This chain is L-aspartate dehydrogenase, found in Serratia proteamaculans (strain 568).